The chain runs to 204 residues: Cytochrome c biogenesis ATP-binding export protein CcmA (204 aa).

Positions 2–204 (IEVRDLGVSR…LDAEDLGGFL (203 aa)) constitute an ABC transporter domain. 34-41 (GPNGIGKT) provides a ligand contact to ATP.

It belongs to the ABC transporter superfamily. CcmA exporter (TC 3.A.1.107) family. In terms of assembly, the complex is composed of two ATP-binding proteins (CcmA) and two transmembrane proteins (CcmB).

Its subcellular location is the cell inner membrane. It catalyses the reaction heme b(in) + ATP + H2O = heme b(out) + ADP + phosphate + H(+). Functionally, part of the ABC transporter complex CcmAB involved in the biogenesis of c-type cytochromes; once thought to export heme, this seems not to be the case, but its exact role is uncertain. Responsible for energy coupling to the transport system. The chain is Cytochrome c biogenesis ATP-binding export protein CcmA from Ruegeria sp. (strain TM1040) (Silicibacter sp.).